Reading from the N-terminus, the 429-residue chain is Hemoglobinase (429 aa).

The signal sequence occupies residues 1–19 (MMLFSLFLISILHILLVKC). Residues 20–31 (QLDTNYEVSDET) constitute a propeptide that is removed on maturation. Histidine 151 is a catalytic residue. Residues 288–309 (FQGSRDKSSSENDEPPMKPRHS) are disordered. The propeptide occupies 292–429 (RDKSSSENDE…INEAIIKICG (138 aa)).

Belongs to the peptidase C13 family.

It carries out the reaction Hydrolysis of proteins and small molecule substrates at -Asn-|-Xaa- bonds.. Its function is as follows. This protease is used by the parasite for degradation of the host globin. The chain is Hemoglobinase from Schistosoma mansoni (Blood fluke).